We begin with the raw amino-acid sequence, 297 residues long: Elongation factor Ts (297 aa).

Positions 82–85 (TDFV) are involved in Mg(2+) ion dislocation from EF-Tu. A compositionally biased stretch (low complexity) spans 223–265 (AQTAAAAETAPPEVSEPEPAAAVTAEEPTPEPVAAAEQPAEPV). Positions 223–297 (AQTAAAAETA…GKSRSNKKKK (75 aa)) are disordered. The span at 286 to 297 (SGGKSRSNKKKK) shows a compositional bias: basic residues.

It belongs to the EF-Ts family.

The protein resides in the cytoplasm. Functionally, associates with the EF-Tu.GDP complex and induces the exchange of GDP to GTP. It remains bound to the aminoacyl-tRNA.EF-Tu.GTP complex up to the GTP hydrolysis stage on the ribosome. In Thermosynechococcus vestitus (strain NIES-2133 / IAM M-273 / BP-1), this protein is Elongation factor Ts.